The following is a 636-amino-acid chain: Threonine--tRNA ligase (636 aa).

Positions 1-61 (MLKITLKDGS…NENCEVEILS (61 aa)) constitute a TGS domain. A catalytic region spans residues 244-534 (EHRKLGKELD…LIEHYEGKFP (291 aa)). The Zn(2+) site is built by C335, H386, and H511.

It belongs to the class-II aminoacyl-tRNA synthetase family. Homodimer. Zn(2+) serves as cofactor.

Its subcellular location is the cytoplasm. The enzyme catalyses tRNA(Thr) + L-threonine + ATP = L-threonyl-tRNA(Thr) + AMP + diphosphate + H(+). In terms of biological role, catalyzes the attachment of threonine to tRNA(Thr) in a two-step reaction: L-threonine is first activated by ATP to form Thr-AMP and then transferred to the acceptor end of tRNA(Thr). Also edits incorrectly charged L-seryl-tRNA(Thr). In Natranaerobius thermophilus (strain ATCC BAA-1301 / DSM 18059 / JW/NM-WN-LF), this protein is Threonine--tRNA ligase.